The primary structure comprises 248 residues: Mannose-binding protein C (248 aa).

The N-terminal stretch at 1 to 20 (MSLFPSLTLLLLSVVATSYS) is a signal peptide. One can recognise a Collagen-like domain in the interval 42–99 (GINGFPGKDGRDGTKGEKGEPGQGLRGLQGPPGKLGPPGNPGSSGSPGPKGQKGDPGE). The disordered stretch occupies residues 43–113 (INGFPGKDGR…DSSLAASERK (71 aa)). Pro47 bears the 4-hydroxyproline mark. Residues 49 to 61 (KDGRDGTKGEKGE) show a composition bias toward basic and acidic residues. Pro73, Pro79, Pro82, and Pro88 each carry 4-hydroxyproline. Over residues 82-91 (PGSSGSPGPK) the composition is skewed to low complexity. Residues 112–130 (RKALQTEMARIKKWLTFSL) adopt a coiled-coil conformation. Residues 134–245 (VGNKFFLTNG…CSSSHLALCE (112 aa)) enclose the C-type lectin domain. Disulfide bonds link Cys155–Cys244 and Cys222–Cys236.

In terms of assembly, oligomeric complex of 3 or more homotrimers. Interacts with MASP1 and MASP2. Interacts with MEP1A and MEP1B and may inhibit their catalytic activity. Post-translationally, hydroxylation on proline residues within the sequence motif, GXPG, is most likely to be 4-hydroxy as this fits the requirement for 4-hydroxylation in vertebrates.

Its subcellular location is the secreted. Calcium-dependent lectin involved in innate immune defense. Binds mannose, fucose and N-acetylglucosamine on different microorganisms and activates the lectin complement pathway. Binds to late apoptotic cells, as well as to apoptotic blebs and to necrotic cells, but not to early apoptotic cells, facilitating their uptake by macrophages. This Chlorocebus aethiops (Green monkey) protein is Mannose-binding protein C (MBL2).